A 381-amino-acid polypeptide reads, in one-letter code: E3 ubiquitin-protein ligase At1g63170 (381 aa).

The tract at residues 1–23 (MSRETTTEATPLILTDGGGGRRS) is disordered. Helical transmembrane passes span 74 to 94 (VVVL…AVLV) and 107 to 127 (VWII…CVEY). The disordered stretch occupies residues 135 to 161 (RRDLSPRSSSSSSSSSSSMDEEEGLGL). The span at 140–152 (PRSSSSSSSSSSS) shows a compositional bias: low complexity. The stretch at 170-194 (LELGQLENENNSFAKHLESANTMIS) forms a coiled coil. 3 consecutive transmembrane segments (helical) span residues 189–209 (ANTM…SSGG), 224–244 (IVFL…ACVI), and 245–265 (GIAV…VAEQ). The segment at 325–366 (CCICLSAYEDETELRELPCGHHFHCGCVDKWLYINATCPLCK) adopts an RING-type; atypical zinc-finger fold.

The protein localises to the membrane. The catalysed reaction is S-ubiquitinyl-[E2 ubiquitin-conjugating enzyme]-L-cysteine + [acceptor protein]-L-lysine = [E2 ubiquitin-conjugating enzyme]-L-cysteine + N(6)-ubiquitinyl-[acceptor protein]-L-lysine.. It participates in protein modification; protein ubiquitination. Its function is as follows. Mediates E2-dependent protein ubiquitination. This is E3 ubiquitin-protein ligase At1g63170 from Arabidopsis thaliana (Mouse-ear cress).